A 194-amino-acid chain; its full sequence is Imidazoleglycerol-phosphate dehydratase (194 aa).

The protein belongs to the imidazoleglycerol-phosphate dehydratase family.

The protein resides in the cytoplasm. It carries out the reaction D-erythro-1-(imidazol-4-yl)glycerol 3-phosphate = 3-(imidazol-4-yl)-2-oxopropyl phosphate + H2O. The protein operates within amino-acid biosynthesis; L-histidine biosynthesis; L-histidine from 5-phospho-alpha-D-ribose 1-diphosphate: step 6/9. This chain is Imidazoleglycerol-phosphate dehydratase, found in Thermoanaerobacter pseudethanolicus (strain ATCC 33223 / 39E) (Clostridium thermohydrosulfuricum).